The following is a 305-amino-acid chain: tRNA dimethylallyltransferase (305 aa).

9 to 16 (GPTAVGKT) provides a ligand contact to ATP. 11 to 16 (TAVGKT) is a substrate binding site. The interaction with substrate tRNA stretch occupies residues 34–37 (DSRQ).

The protein belongs to the IPP transferase family. As to quaternary structure, monomer. Mg(2+) serves as cofactor.

The catalysed reaction is adenosine(37) in tRNA + dimethylallyl diphosphate = N(6)-dimethylallyladenosine(37) in tRNA + diphosphate. Functionally, catalyzes the transfer of a dimethylallyl group onto the adenine at position 37 in tRNAs that read codons beginning with uridine, leading to the formation of N6-(dimethylallyl)adenosine (i(6)A). This chain is tRNA dimethylallyltransferase, found in Roseiflexus sp. (strain RS-1).